The chain runs to 229 residues: uncharacterized protein (229 aa).

To T.pallidum TP_0315, TP_0618 and TP_0619.

This is an uncharacterized protein from Treponema pallidum (strain Nichols).